Reading from the N-terminus, the 256-residue chain is Tryptophan synthase alpha chain (256 aa).

Active-site proton acceptor residues include E48 and D59.

The protein belongs to the TrpA family. In terms of assembly, tetramer of two alpha and two beta chains.

It catalyses the reaction (1S,2R)-1-C-(indol-3-yl)glycerol 3-phosphate + L-serine = D-glyceraldehyde 3-phosphate + L-tryptophan + H2O. Its pathway is amino-acid biosynthesis; L-tryptophan biosynthesis; L-tryptophan from chorismate: step 5/5. The alpha subunit is responsible for the aldol cleavage of indoleglycerol phosphate to indole and glyceraldehyde 3-phosphate. This Caldicellulosiruptor bescii (strain ATCC BAA-1888 / DSM 6725 / KCTC 15123 / Z-1320) (Anaerocellum thermophilum) protein is Tryptophan synthase alpha chain.